We begin with the raw amino-acid sequence, 523 residues long: GMP synthase [glutamine-hydrolyzing] (523 aa).

The 190-residue stretch at 9 to 198 (PVLVVDYGAQ…LTEIAGLEQN (190 aa)) folds into the Glutamine amidotransferase type-1 domain. Cysteine 86 serves as the catalytic Nucleophile. Residues histidine 172 and glutamate 174 contribute to the active site. Positions 199–397 (WTAANIAEEL…LGLPEVIVAR (199 aa)) constitute a GMPS ATP-PPase domain. 227–233 (SGGVDSA) serves as a coordination point for ATP.

As to quaternary structure, homodimer.

It catalyses the reaction XMP + L-glutamine + ATP + H2O = GMP + L-glutamate + AMP + diphosphate + 2 H(+). The protein operates within purine metabolism; GMP biosynthesis; GMP from XMP (L-Gln route): step 1/1. Its function is as follows. Catalyzes the synthesis of GMP from XMP. This Corynebacterium efficiens (strain DSM 44549 / YS-314 / AJ 12310 / JCM 11189 / NBRC 100395) protein is GMP synthase [glutamine-hydrolyzing].